A 302-amino-acid chain; its full sequence is MALHDMEDFTFDGTKRLSVNYVKGILQPTDTCDIWDKIWNFQAKPDDLLISTYPKAGTTWTQEIVELIQNEGDVEKSKRAPTHQRFPFLEMKIPSLGSGLEQAHAMPSPRILKTHLPFHLLPPSLLEKNCKIIYVARNPKDNMVSYYHFQRMNKALPAPGTWEEYFETFLAGKVCWGSWHEHVKGWWEAKDKHRILYLFYEDMKKNPKHEIQKLAEFIGKKLDDKVLDKIVHYTSFDVMKQNPMANYSSIPAEIMDHSISPFMRKGAVGDWKKHFTVAQNERFDEDYKKKMTDTRLTFHFQF.

K55 to W60 contacts 3'-phosphoadenylyl sulfate. K113–H115 is a substrate binding site. H115 functions as the Proton acceptor in the catalytic mechanism. 3'-phosphoadenylyl sulfate-binding positions include R137, S145, Y200, T234–M239, and F262–G266.

Belongs to the sulfotransferase 1 family. In terms of tissue distribution, expressed at high levels in fetal lung and kidney and at low levels in fetal heart, adult kidney, ovary and spinal cord.

Its subcellular location is the cytoplasm. The protein localises to the cytosol. It carries out the reaction a phenol + 3'-phosphoadenylyl sulfate = an aryl sulfate + adenosine 3',5'-bisphosphate + H(+). It catalyses the reaction 17beta-estradiol + 3'-phosphoadenylyl sulfate = 17beta-estradiol 3-sulfate + adenosine 3',5'-bisphosphate + H(+). The catalysed reaction is bisphenol A + 3'-phosphoadenylyl sulfate = bisphenyl A sulfate + adenosine 3',5'-bisphosphate + H(+). Its function is as follows. Sulfotransferase that utilizes 3'-phospho-5'-adenylyl sulfate (PAPS) as sulfonate donor to catalyze the sulfate conjugation of phenolic compounds. Can also sulfonate estrogenic compounds, however, the dietary flavonoids (phytoestrogen) and environmental estrogens, like bisphenol A are better substrates than 17beta-estradiol (E2). Mediates the sulfation of doxorubicin and its analog epirubicin, two antitumor anthracyclines. This Homo sapiens (Human) protein is Sulfotransferase 1C4.